A 448-amino-acid polypeptide reads, in one-letter code: GTPase Der (448 aa).

2 consecutive EngA-type G domains span residues 2 to 171 (FTVV…PDTQ) and 181 to 364 (PKIA…EEYS). GTP-binding positions include 8–15 (GRPNVGKS), 58–62 (DTGGF), 123–126 (NKID), 187–194 (GRPNVGKS), 234–238 (DTAGI), and 305–308 (NKWD). Positions 365–448 (KRVSTSELNR…PINIKIKQRK (84 aa)) constitute a KH-like domain.

It belongs to the TRAFAC class TrmE-Era-EngA-EngB-Septin-like GTPase superfamily. EngA (Der) GTPase family. In terms of assembly, associates with the 50S ribosomal subunit.

GTPase that plays an essential role in the late steps of ribosome biogenesis. In Thermodesulfovibrio yellowstonii (strain ATCC 51303 / DSM 11347 / YP87), this protein is GTPase Der.